The sequence spans 562 residues: Protein wntless (562 aa).

Over 1-13 (MSGTILENLSGRK) the chain is Cytoplasmic. Residues 14 to 34 (LSILVSSLMLCQVACFLMGGL) form a helical membrane-spanning segment. At 35 to 239 (YAPVPAGHQT…AIHQNGGFTQ (205 aa)) the chain is on the lumenal side. N-linked (GlcNAc...) asparagine glycans are attached at residues N58 and N103. A helical transmembrane segment spans residues 240-260 (VWLLLKTLLFPFVVGIMIWFW). Residues 261–270 (RRVHILQRSP) are Cytoplasmic-facing. The helical transmembrane segment at 271–291 (ALLEYMLLYLGGALSFLNLPL) threads the bilayer. The Lumenal portion of the chain corresponds to 292–311 (EYLTLSIEMPYMLLLSDVRQ). A helical transmembrane segment spans residues 312-332 (GIFYAMLLSFWLVFAGEHMLI). The Cytoplasmic portion of the chain corresponds to 333–344 (QDTPNKSTIRSR). A helical membrane pass occupies residues 345–365 (YWKHLSAVVVGCISLFVFDIC). Residues 366-390 (ERGVQLRNPFYSIWTTPLGAKVAMS) lie on the Lumenal side of the membrane. Residues 391–411 (FIVLAGVSAAIYFLFLCFMVW) form a helical membrane-spanning segment. Residues 412-441 (KVFKDIGDKRTSLPSMSQARRLHYEGLIYR) are Cytoplasmic-facing. Residues 442 to 462 (FKFLMLATLLCAGLTVAGFIM) traverse the membrane as a helical segment. At 463–482 (GQMAEGHWKWNEDIEIQLTS) the chain is on the lumenal side. The helical transmembrane segment at 483 to 503 (AFLTGVYGMWNIYIFALIILY) threads the bilayer. Residues 504–562 (APSHKQWPTMRHSDETTQSNENIVASAASEEIEFSNLPSDSNPSEISSLTSFTRKVAFD) lie on the Cytoplasmic side of the membrane.

It belongs to the wntless family. As to quaternary structure, interacts with wg; in the Golgi. Interacts with Vps35, a component of the retromer complex; wls stability is regulated by Vps35.

Its subcellular location is the presynaptic cell membrane. The protein localises to the postsynaptic cell membrane. It is found in the cell membrane. The protein resides in the endoplasmic reticulum membrane. It localises to the endosome membrane. Its subcellular location is the golgi apparatus membrane. Functionally, a segment polarity gene required for wingless (wg)-dependent patterning processes, acting in both wg-sending cells and wg-target cells. In non-neuronal cells wls directs wg secretion. The wls traffic loop encompasses the Golgi, the cell surface, an endocytic compartment and a retrograde route leading back to the Golgi, and involves clathrin-mediated endocytosis and the retromer complex (a conserved protein complex consisting of Vps35 and Vps26). In neuronal cells (the larval motorneuron NMJ), the wg signal moves across the synapse via the release of wls-containing exosome-like vesicles. Postsynaptic wls is required for the trafficking of fz2 through the fz2-interacting protein Grip. The protein is Protein wntless of Drosophila virilis (Fruit fly).